The sequence spans 224 residues: Oxalate oxidase 2 (224 aa).

The first 23 residues, 1-23 (MGYSKTLAVSLFAVLLLAPAVLA), serve as a signal peptide directing secretion. Cysteine 33 and cysteine 49 are disulfide-bonded. In terms of domain architecture, Cupin type-1 spans 63-214 (SKLAKAGNTS…ALRVEAGVVE (152 aa)). Asparagine 70 and asparagine 75 each carry an N-linked (GlcNAc...) asparagine glycan. Mn(2+) contacts are provided by histidine 111, histidine 113, glutamate 118, and histidine 160.

This sequence belongs to the germin family. In terms of assembly, oligomer (believed to be a pentamer but probably hexamer). In terms of processing, glycosylated. A form called G contains antennary GlcNAc residues, whereas a form called G' lacks antennary GlcNAc residues in its otherwise identical glycans. In terms of tissue distribution, root.

It localises to the secreted. It is found in the extracellular space. The protein resides in the apoplast. Its subcellular location is the cell wall. The catalysed reaction is oxalate + O2 + 2 H(+) = H2O2 + 2 CO2. Its function is as follows. Releases hydrogen peroxide in the apoplast. May play an important role in several aspects of plant growth and defense mechanisms. In Hordeum vulgare (Barley), this protein is Oxalate oxidase 2.